The primary structure comprises 124 residues: Small ribosomal subunit protein uS12 (124 aa).

Residues 1–25 form a disordered region; the sequence is MARINQLVRKPRRARAKKSDVPALE. D89 is modified (3-methylthioaspartic acid). The disordered stretch occupies residues 103-124; sequence DTAGVSGRRRGRSKYGEKKPKE.

Belongs to the universal ribosomal protein uS12 family. As to quaternary structure, part of the 30S ribosomal subunit. Contacts proteins S8 and S17. May interact with IF1 in the 30S initiation complex.

In terms of biological role, with S4 and S5 plays an important role in translational accuracy. Its function is as follows. Interacts with and stabilizes bases of the 16S rRNA that are involved in tRNA selection in the A site and with the mRNA backbone. Located at the interface of the 30S and 50S subunits, it traverses the body of the 30S subunit contacting proteins on the other side and probably holding the rRNA structure together. The combined cluster of proteins S8, S12 and S17 appears to hold together the shoulder and platform of the 30S subunit. The chain is Small ribosomal subunit protein uS12 from Coxiella burnetii (strain Dugway 5J108-111).